The following is a 154-amino-acid chain: Egg-lysin (154 aa).

The first 18 residues, 1-18 (MKLLVLCIFAMMATLAMS), serve as a signal peptide directing secretion.

Homodimer. Sperm.

In terms of biological role, dissolves the egg vitelline layer nonenzymatically during fertilization. It creates a hole of about 3 mu-m in diameter through which the sperm pass. This is Egg-lysin from Haliotis sorenseni (White abalone).